Consider the following 345-residue polypeptide: MFSSLYPLARASLFKMDAEDAHHLTLRALGAAGRTGLACALSARVPDAPRTVMGLTFRNPVGLAAGLDKDGAAIDGLAALGFGFIEVGTVTPRPQPGNPRPRMFRLPQAEALINRMGFNNHGVDQFVKNVQAARYRGILGLNIGKNADTPIERAAEDYLYCLERVYPFASYVTINISSPNTKNLRQLQGAGELDALLAALKDKQQRLADLHGKLVPLALKIAPDLDDEQVKEIGDTLLRHKIEAVIATNTTLSRAAVQGLPHADEAGGLSGRPVFDASNEVIRKLHAEVGNDVPIIGVGGIFSGEDARAKLAAGAALVQLYTGFIYRGPALVSECVKAIARERTA.

Residues 65 to 69 (AGLDK) and T89 each bind FMN. A substrate-binding site is contributed by K69. 114-118 (NRMGF) serves as a coordination point for substrate. FMN is bound by residues N142 and N175. N175 contributes to the substrate binding site. S178 (nucleophile) is an active-site residue. Residue N180 coordinates substrate. Residues K220 and T248 each contribute to the FMN site. 249 to 250 (NT) is a binding site for substrate. FMN-binding positions include G271, G300, and 321 to 322 (YT).

Belongs to the dihydroorotate dehydrogenase family. Type 2 subfamily. As to quaternary structure, monomer. FMN is required as a cofactor.

The protein resides in the cell membrane. It catalyses the reaction (S)-dihydroorotate + a quinone = orotate + a quinol. It functions in the pathway pyrimidine metabolism; UMP biosynthesis via de novo pathway; orotate from (S)-dihydroorotate (quinone route): step 1/1. Its function is as follows. Catalyzes the conversion of dihydroorotate to orotate with quinone as electron acceptor. The polypeptide is Dihydroorotate dehydrogenase (quinone) (Burkholderia cenocepacia (strain ATCC BAA-245 / DSM 16553 / LMG 16656 / NCTC 13227 / J2315 / CF5610) (Burkholderia cepacia (strain J2315))).